The chain runs to 492 residues: Bifunctional purine biosynthesis protein PurH (492 aa).

The MGS-like domain maps to 1-144; that stretch reads MKKAILSVSN…KNYKHVTTIV (144 aa).

This sequence belongs to the PurH family.

It carries out the reaction (6R)-10-formyltetrahydrofolate + 5-amino-1-(5-phospho-beta-D-ribosyl)imidazole-4-carboxamide = 5-formamido-1-(5-phospho-D-ribosyl)imidazole-4-carboxamide + (6S)-5,6,7,8-tetrahydrofolate. It catalyses the reaction IMP + H2O = 5-formamido-1-(5-phospho-D-ribosyl)imidazole-4-carboxamide. Its pathway is purine metabolism; IMP biosynthesis via de novo pathway; 5-formamido-1-(5-phospho-D-ribosyl)imidazole-4-carboxamide from 5-amino-1-(5-phospho-D-ribosyl)imidazole-4-carboxamide (10-formyl THF route): step 1/1. The protein operates within purine metabolism; IMP biosynthesis via de novo pathway; IMP from 5-formamido-1-(5-phospho-D-ribosyl)imidazole-4-carboxamide: step 1/1. The polypeptide is Bifunctional purine biosynthesis protein PurH (Staphylococcus aureus (strain Newman)).